The chain runs to 285 residues: 4-diphosphocytidyl-2-C-methyl-D-erythritol kinase (285 aa).

Lysine 12 is an active-site residue. 94–104 serves as a coordination point for ATP; that stretch reads PAQAGMGGGSS. Aspartate 136 is a catalytic residue.

This sequence belongs to the GHMP kinase family. IspE subfamily.

It carries out the reaction 4-CDP-2-C-methyl-D-erythritol + ATP = 4-CDP-2-C-methyl-D-erythritol 2-phosphate + ADP + H(+). Its pathway is isoprenoid biosynthesis; isopentenyl diphosphate biosynthesis via DXP pathway; isopentenyl diphosphate from 1-deoxy-D-xylulose 5-phosphate: step 3/6. Functionally, catalyzes the phosphorylation of the position 2 hydroxy group of 4-diphosphocytidyl-2C-methyl-D-erythritol. This Paracidovorax citrulli (strain AAC00-1) (Acidovorax citrulli) protein is 4-diphosphocytidyl-2-C-methyl-D-erythritol kinase.